Here is a 268-residue protein sequence, read N- to C-terminus: Tropinone reductase homolog At2g29150 (268 aa).

An NADP(+)-binding site is contributed by 22 to 46 (LVTGGSKGLGEAVVEELAMLGARVH). A substrate-binding site is contributed by Ser-155. Catalysis depends on Tyr-167, which acts as the Proton acceptor.

It belongs to the short-chain dehydrogenases/reductases (SDR) family. SDR65C subfamily.

In terms of biological role, enantiospecific reductase active on cyclic monoterpenes and small flexible lipophilic carbonyls. No activity with tropinone, nitrogen-containing tropinone analogs, tropine or pseudotropine as substrate. The chain is Tropinone reductase homolog At2g29150 from Arabidopsis thaliana (Mouse-ear cress).